The primary structure comprises 356 residues: 1-deoxy-D-xylulose 5-phosphate reductoisomerase (356 aa).

NADPH-binding residues include threonine 7, glycine 8, serine 9, isoleucine 10, glycine 31, asparagine 33, and asparagine 111. Position 112 (lysine 112) interacts with 1-deoxy-D-xylulose 5-phosphate. Position 113 (glutamate 113) interacts with NADPH. Aspartate 131 serves as a coordination point for Mn(2+). 1-deoxy-D-xylulose 5-phosphate-binding residues include serine 132, glutamate 133, serine 155, and histidine 178. Mn(2+) is bound at residue glutamate 133. Glycine 184 lines the NADPH pocket. Residues serine 191, asparagine 196, lysine 197, and glutamate 200 each contribute to the 1-deoxy-D-xylulose 5-phosphate site. Glutamate 200 contributes to the Mn(2+) binding site.

The protein belongs to the DXR family. Mg(2+) is required as a cofactor. It depends on Mn(2+) as a cofactor.

It carries out the reaction 2-C-methyl-D-erythritol 4-phosphate + NADP(+) = 1-deoxy-D-xylulose 5-phosphate + NADPH + H(+). The protein operates within isoprenoid biosynthesis; isopentenyl diphosphate biosynthesis via DXP pathway; isopentenyl diphosphate from 1-deoxy-D-xylulose 5-phosphate: step 1/6. In terms of biological role, catalyzes the NADPH-dependent rearrangement and reduction of 1-deoxy-D-xylulose-5-phosphate (DXP) to 2-C-methyl-D-erythritol 4-phosphate (MEP). This is 1-deoxy-D-xylulose 5-phosphate reductoisomerase from Campylobacter jejuni (strain RM1221).